A 186-amino-acid polypeptide reads, in one-letter code: Casparian strip membrane protein 5 (186 aa).

Topologically, residues 1 to 25 (MKTDAIELGVAKDSTPIGGANRGVS) are cytoplasmic. Residues 26 to 46 (ILDFILRLVALVGTLASAILM) form a helical membrane-spanning segment. Residues 47–73 (GTTNETLPFATQFIRFRAEYDDLPTFT) are Extracellular-facing. N-linked (GlcNAc...) asparagine glycosylation occurs at asparagine 50. Residues 74–94 (FFVVANIVVSGYLLLSLPLSI) traverse the membrane as a helical segment. The Cytoplasmic portion of the chain corresponds to 95-106 (VNIVRSTAKNRR). The chain crosses the membrane as a helical span at residues 107–127 (IILIIFDTAMLALLTAGASAA). At 128–156 (AAIVYLAHKGNTRANWFAICQQFNSFCER) the chain is on the extracellular side. Residues 157 to 177 (ISGSLIGSFVGVAVFILLILM) form a helical membrane-spanning segment. Residues 178 to 186 (SASALSRRN) are Cytoplasmic-facing.

This sequence belongs to the Casparian strip membrane proteins (CASP) family. In terms of assembly, homodimer and heterodimers.

Its subcellular location is the cell membrane. In terms of biological role, regulates membrane-cell wall junctions and localized cell wall deposition. Required for establishment of the Casparian strip membrane domain (CSD) and the subsequent formation of Casparian strips, a cell wall modification of the root endodermis that determines an apoplastic barrier between the intraorganismal apoplasm and the extraorganismal apoplasm and prevents lateral diffusion. The sequence is that of Casparian strip membrane protein 5 from Ricinus communis (Castor bean).